Consider the following 273-residue polypeptide: Probable ribosomal RNA small subunit methyltransferase A (273 aa).

Positions 23, 25, 50, 71, 95, and 110 each coordinate S-adenosyl-L-methionine.

Belongs to the class I-like SAM-binding methyltransferase superfamily. rRNA adenine N(6)-methyltransferase family. RsmA subfamily.

The protein resides in the cytoplasm. Its function is as follows. Specifically dimethylates two adjacent adenosines in the loop of a conserved hairpin near the 3'-end of 16S rRNA in the 30S particle. May play a critical role in biogenesis of 30S subunits. The sequence is that of Probable ribosomal RNA small subunit methyltransferase A from Pyrococcus furiosus (strain ATCC 43587 / DSM 3638 / JCM 8422 / Vc1).